The following is a 239-amino-acid chain: Enolase-phosphatase E1 (239 aa).

It belongs to the HAD-like hydrolase superfamily. MasA/MtnC family. As to quaternary structure, monomer. Mg(2+) is required as a cofactor.

The enzyme catalyses 5-methylsulfanyl-2,3-dioxopentyl phosphate + H2O = 1,2-dihydroxy-5-(methylsulfanyl)pent-1-en-3-one + phosphate. The protein operates within amino-acid biosynthesis; L-methionine biosynthesis via salvage pathway; L-methionine from S-methyl-5-thio-alpha-D-ribose 1-phosphate: step 3/6. Its pathway is amino-acid biosynthesis; L-methionine biosynthesis via salvage pathway; L-methionine from S-methyl-5-thio-alpha-D-ribose 1-phosphate: step 4/6. Bifunctional enzyme that catalyzes the enolization of 2,3-diketo-5-methylthiopentyl-1-phosphate (DK-MTP-1-P) into the intermediate 2-hydroxy-3-keto-5-methylthiopentenyl-1-phosphate (HK-MTPenyl-1-P), which is then dephosphorylated to form the acireductone 1,2-dihydroxy-3-keto-5-methylthiopentene (DHK-MTPene). The protein is Enolase-phosphatase E1 of Streptomyces avermitilis (strain ATCC 31267 / DSM 46492 / JCM 5070 / NBRC 14893 / NCIMB 12804 / NRRL 8165 / MA-4680).